Here is a 346-residue protein sequence, read N- to C-terminus: Uracil-DNA glycosylase (346 aa).

The interval 1 to 105 is disordered; that stretch reads MSGKITDFFE…KLKNEEKSEE (105 aa). The span at 20-29 shows a compositional bias: basic and acidic residues; the sequence is AENKDNDKEL. Residues 30–42 show a composition bias toward low complexity; sequence TSTTTTTTTTSTT. The span at 43-64 shows a compositional bias: basic residues; it reads SKKKVAAAPKKKAAVASKKRKH. The segment covering 67–86 has biased composition (acidic residues); it reads SDEETDKEEQQNDDDDDGEE. Aspartate 186 (proton acceptor) is an active-site residue.

The protein belongs to the uracil-DNA glycosylase (UDG) superfamily. UNG family.

The protein resides in the mitochondrion. It is found in the nucleus. The catalysed reaction is Hydrolyzes single-stranded DNA or mismatched double-stranded DNA and polynucleotides, releasing free uracil.. Its function is as follows. Excises uracil residues from the DNA which can arise as a result of misincorporation of dUMP residues by DNA polymerase or due to deamination of cytosine. This Dictyostelium discoideum (Social amoeba) protein is Uracil-DNA glycosylase (uglA).